A 611-amino-acid chain; its full sequence is Homeobox protein BEL1 homolog (611 aa).

Disordered stretches follow at residues 63-87, 101-133, 141-160, and 174-195; these read QIRM…DQNQ, VNND…NPTS, LRPQ…TQHQ, and SHHQ…FQIG. The segment covering 118 to 133 has biased composition (low complexity); it reads PSQGLSLSLSSSNPTS. Over residues 174–183 the composition is skewed to low complexity; the sequence is SHHQNNNNNN. Positions 197–213 are SR/KY domain; that stretch reads SKYLSPAQELLSEFCSL. Residues 225–263 are disordered; that stretch reads MKHKKKQKGKQQEEWDTSHHSNNDQHDQSATTSSKKHVP. Over residues 234 to 251 the composition is skewed to basic and acidic residues; it reads KQQEEWDTSHHSNNDQHD. Positions 269–340 are BELL domain; sequence EFMELQKRKA…CLKDGLVGQI (72 aa). Residues 275–290 carry the Bipartite nuclear localization motif; sequence KRKAKLLSMLEELKRR. Residues 391 to 453 constitute a DNA-binding region (homeobox); the sequence is PWRPQRGLPE…NARVRLWKPM (63 aa).

This sequence belongs to the TALE/BELL homeobox family. As to quaternary structure, may form heterodimeric complexes with TALE/KNOX proteins STM, KNAT1/BP, KNAT2 and KNAT5. Interacts with AG-SEP1 and AG-SEP3 dimers. Interacts with KNATM, isoform KNATM-B. Interacts with BZIP30. In terms of tissue distribution, expressed in both floral and vegetative tissues.

The protein localises to the nucleus. Functionally, plays a major role in ovule patterning and in determination of integument identity via its interaction with MADS-box factors. Formation of complex with AG-SEP dimers negatively regulates the carpel identity process and favors the maintenance of ovule identity. BEL1-STM complex maintains the indeterminacy of the inflorescence meristem. Required, with SPL, for cytokinin-induced PIN1 expression in ovules. This chain is Homeobox protein BEL1 homolog (BEL1), found in Arabidopsis thaliana (Mouse-ear cress).